Reading from the N-terminus, the 454-residue chain is tRNA modification GTPase MnmE (454 aa).

(6S)-5-formyl-5,6,7,8-tetrahydrofolate is bound by residues arginine 23, glutamate 80, and lysine 120. The region spanning 216 to 377 is the TrmE-type G domain; the sequence is GMKVVIAGRP…LRNHLKQSMG (162 aa). Asparagine 226 is a binding site for K(+). Residues 226 to 231, 245 to 251, 270 to 273, 335 to 338, and 358 to 360 each bind GTP; these read NAGKSS, TDIAGTT, DTAG, NKAD, and SAR. Mg(2+) is bound at residue serine 230. K(+)-binding residues include threonine 245, isoleucine 247, and threonine 250. Mg(2+) is bound at residue threonine 251. Lysine 454 provides a ligand contact to (6S)-5-formyl-5,6,7,8-tetrahydrofolate.

It belongs to the TRAFAC class TrmE-Era-EngA-EngB-Septin-like GTPase superfamily. TrmE GTPase family. As to quaternary structure, homodimer. Heterotetramer of two MnmE and two MnmG subunits. K(+) serves as cofactor.

Its subcellular location is the cytoplasm. Its function is as follows. Exhibits a very high intrinsic GTPase hydrolysis rate. Involved in the addition of a carboxymethylaminomethyl (cmnm) group at the wobble position (U34) of certain tRNAs, forming tRNA-cmnm(5)s(2)U34. This is tRNA modification GTPase MnmE from Escherichia coli O17:K52:H18 (strain UMN026 / ExPEC).